A 67-amino-acid polypeptide reads, in one-letter code: Phycobilisome 7.8 kDa linker polypeptide, allophycocyanin-associated, core (67 aa).

Positions 1–56 (MRMFKITACVPSQTRIRTQRELQNTYFTKLVPYENWFREQQRIQKMGGKIVKVELF) constitute a CpcD-like domain.

Belongs to the phycobilisome linker protein family.

The protein localises to the cellular thylakoid membrane. Functionally, rod linker protein, associated with allophycocyanin. Linker polypeptides determine the state of aggregation and the location of the disk-shaped phycobiliprotein units within the phycobilisome and modulate their spectroscopic properties in order to mediate a directed and optimal energy transfer. The polypeptide is Phycobilisome 7.8 kDa linker polypeptide, allophycocyanin-associated, core (apcC) (Thermosynechococcus vestitus (strain NIES-2133 / IAM M-273 / BP-1)).